An 83-amino-acid chain; its full sequence is uncharacterized protein (83 aa).

This is an uncharacterized protein from Escherichia coli (Bacteriophage T4).